Here is a 429-residue protein sequence, read N- to C-terminus: MAEGSRSPLRSFVEVAPGSHFPIQNLPFGVFRRRGSPEPEPPRPAVAIGDFALDLAAVSDAGLFHGPLLSASPCFRQETLNMFLGMGRPAWKEARATLQKILSADEPVLRDNEALKKKCLVPMSDTEMLLPITVGDYTDFFCSVHHARNCGFIFRGPQTPVNPNWFQLPVGYHGRASSVIVSGTDIIRPKGQGHPTGDSRPYFGPSKKLDFELEMAAIVGPGNELGKPIDINDAEEHIFGLMIMNDWSARDIQAWETIPLGPFLGKSFSTTVSPWIVTMDALKPFTCEAPKQEPEPLPYLAEKNHVNYDIPLEVWIKPKEQSEPSMVAKSNFKHLYWTLTQQLAHHTVNGCNLRPGDMFATGTLSGPETESLGCLLELTWNGQKEISVGNSTRKFLEDGDEVILTACCKGEGYNVGFGTCTGKVLPALP.

Residue Asp-139 coordinates Ca(2+). His-146 functions as the Proton acceptor in the catalytic mechanism. A substrate-binding site is contributed by Arg-155. Glu-212, Glu-214, and Asp-246 together coordinate Ca(2+). Asp-246 contacts Mg(2+). Gln-253 lines the substrate pocket. 2 residues coordinate Mg(2+): Lys-266 and Thr-270. Residue Thr-363 participates in substrate binding.

It belongs to the FAH family. Ca(2+) serves as cofactor. Mg(2+) is required as a cofactor.

The catalysed reaction is 4-fumarylacetoacetate + H2O = acetoacetate + fumarate + H(+). Its pathway is amino-acid degradation; L-phenylalanine degradation; acetoacetate and fumarate from L-phenylalanine: step 6/6. Converts fumarylacetoacetate to acetoacetate and fumarate. Involved in tyrosine catabolic pathway. Catalyzes the final step in the tyrosine degradation pathway. This chain is Fumarylacetoacetase, found in Oryza sativa subsp. japonica (Rice).